The chain runs to 631 residues: Putative ATP-dependent DNA helicase Q1 (631 aa).

Residues 118 to 293 form the Helicase ATP-binding domain; it reads INAVMSKEDA…KDMLGIQAAL (176 aa). Residue 131-138 participates in ATP binding; sequence LSTGGGKS. Positions 237–240 match the DEVH box motif; the sequence is DEVH. One can recognise a Helicase C-terminal domain in the interval 318–466; that stretch reads CTEEIAKTIK…NLYNMVRYAA (149 aa). Zn(2+) is bound by residues cysteine 471, cysteine 489, cysteine 493, and cysteine 496. Residues 610-631 are disordered; it reads ESKSRKRKASSSVEEEDVMVLD. The span at 622–631 shows a compositional bias: acidic residues; it reads VEEEDVMVLD.

This sequence belongs to the helicase family. RecQ subfamily. Zn(2+) serves as cofactor.

It is found in the nucleus. It carries out the reaction Couples ATP hydrolysis with the unwinding of duplex DNA by translocating in the 3'-5' direction.. The enzyme catalyses ATP + H2O = ADP + phosphate + H(+). Its function is as follows. DNA helicase that may play a role in the repair of DNA that is damaged by ultraviolet light or other mutagens. Exhibits a magnesium-dependent ATP-dependent DNA-helicase activity that unwinds single- and double-stranded DNA in a 3'-5' direction. This is Putative ATP-dependent DNA helicase Q1 from Caenorhabditis elegans.